A 407-amino-acid polypeptide reads, in one-letter code: Carbamoyl phosphate synthase small chain (407 aa).

Positions 1 to 205 (MTETTPKTAP…LQDGYGEQDA (205 aa)) are CPSase. L-glutamine is bound by residues S60, G257, and G259. The region spanning 209-397 (HVVALDFGVK…INLIRERKGQ (189 aa)) is the Glutamine amidotransferase type-1 domain. Catalysis depends on C286, which acts as the Nucleophile. L-glutamine is bound by residues L287, Q290, N328, G330, and F331. Catalysis depends on residues H370 and E372.

It belongs to the CarA family. Composed of two chains; the small (or glutamine) chain promotes the hydrolysis of glutamine to ammonia, which is used by the large (or ammonia) chain to synthesize carbamoyl phosphate. Tetramer of heterodimers (alpha,beta)4.

The catalysed reaction is hydrogencarbonate + L-glutamine + 2 ATP + H2O = carbamoyl phosphate + L-glutamate + 2 ADP + phosphate + 2 H(+). It carries out the reaction L-glutamine + H2O = L-glutamate + NH4(+). It functions in the pathway amino-acid biosynthesis; L-arginine biosynthesis; carbamoyl phosphate from bicarbonate: step 1/1. Its pathway is pyrimidine metabolism; UMP biosynthesis via de novo pathway; (S)-dihydroorotate from bicarbonate: step 1/3. Functionally, small subunit of the glutamine-dependent carbamoyl phosphate synthetase (CPSase). CPSase catalyzes the formation of carbamoyl phosphate from the ammonia moiety of glutamine, carbonate, and phosphate donated by ATP, constituting the first step of 2 biosynthetic pathways, one leading to arginine and/or urea and the other to pyrimidine nucleotides. The small subunit (glutamine amidotransferase) binds and cleaves glutamine to supply the large subunit with the substrate ammonia. This Brucella suis (strain ATCC 23445 / NCTC 10510) protein is Carbamoyl phosphate synthase small chain.